The chain runs to 632 residues: Biosynthetic arginine decarboxylase (632 aa).

Lys101 carries the post-translational modification N6-(pyridoxal phosphate)lysine. 281–291 provides a ligand contact to substrate; the sequence is FDVGGGLGVDY.

This sequence belongs to the Orn/Lys/Arg decarboxylase class-II family. SpeA subfamily. The cofactor is Mg(2+). Pyridoxal 5'-phosphate serves as cofactor.

It carries out the reaction L-arginine + H(+) = agmatine + CO2. Its pathway is amine and polyamine biosynthesis; agmatine biosynthesis; agmatine from L-arginine: step 1/1. In terms of biological role, catalyzes the biosynthesis of agmatine from arginine. This chain is Biosynthetic arginine decarboxylase, found in Salmonella agona (strain SL483).